The sequence spans 1257 residues: Bifunctional autolysin (1257 aa).

The N-terminal stretch at Met-1–Ala-29 is a signal peptide. Polar residues predominate over residues Gln-99–Gly-137. 3 disordered regions span residues Gln-99–Asn-150, Ala-173–Pro-217, and Thr-417–Gly-441. Composition is skewed to low complexity over residues Ala-173–Pro-208 and Ser-419–Thr-440. Positions Ala-197–Lys-776 are N-acetylmuramoyl-L-alanine amidase. 7 consecutive GW domains span residues Thr-444 to Ala-518, Ser-520 to Lys-594, Thr-613 to Ala-687, Ser-689 to Ala-763, Thr-785 to Leu-860, Lys-862 to Ala-937, and Ala-944 to Ile-1018. The tract at residues Ala-777 to Lys-1257 is endo-beta-N-acetylglucosaminidase.

The protein in the N-terminal section; belongs to the N-acetylmuramoyl-L-alanine amidase 2 family. In the C-terminal section; belongs to the glycosyl hydrolase 73 family. Oligomer; forms a ring structure at the cell surface which is important for efficient partitioning of daughter cells after cell division. Post-translationally, undergoes proteolytic processing to generate the two extracellular lytic enzymes, probably at the septal region on the cell surface.

The protein resides in the secreted. The enzyme catalyses Hydrolyzes the link between N-acetylmuramoyl residues and L-amino acid residues in certain cell-wall glycopeptides.. It catalyses the reaction an N(4)-(oligosaccharide-(1-&gt;3)-[oligosaccharide-(1-&gt;6)]-beta-D-Man-(1-&gt;4)-beta-D-GlcNAc-(1-&gt;4)-alpha-D-GlcNAc)-L-asparaginyl-[protein] + H2O = an oligosaccharide-(1-&gt;3)-[oligosaccharide-(1-&gt;6)]-beta-D-Man-(1-&gt;4)-D-GlcNAc + N(4)-(N-acetyl-beta-D-glucosaminyl)-L-asparaginyl-[protein]. Functionally, endohydrolysis of the di-N-acetylchitobiosyl unit in high-mannose glycopeptides and glycoproteins containing the -[(Man)5(GlcNAc)2]-Asn structure. One N-acetyl-D-glucosamine residue remains attached to the protein; the rest of the oligosaccharide is released intact. Cleaves the peptidoglycan connecting the daughter cells at the end of the cell division cycle, resulting in the separation of the two newly divided cells. Acts as an autolysin in penicillin-induced lysis. The polypeptide is Bifunctional autolysin (atl) (Staphylococcus aureus (strain MRSA252)).